The primary structure comprises 101 residues: Small ribosomal subunit protein uS14 (101 aa).

This sequence belongs to the universal ribosomal protein uS14 family. In terms of assembly, part of the 30S ribosomal subunit. Contacts proteins S3 and S10.

In terms of biological role, binds 16S rRNA, required for the assembly of 30S particles and may also be responsible for determining the conformation of the 16S rRNA at the A site. This is Small ribosomal subunit protein uS14 from Kocuria rhizophila (strain ATCC 9341 / DSM 348 / NBRC 103217 / DC2201).